The chain runs to 530 residues: Calcium/calmodulin-dependent protein kinase type II alpha chain (530 aa).

One can recognise a Protein kinase domain in the interval 12–272 (DNYDIKEELG…AAEALKHPWI (261 aa)). ATP contacts are provided by residues 20–28 (LGKGAFSIV) and Lys43. Asp136 serves as the catalytic Proton acceptor. Thr287 bears the Phosphothreonine; by autocatalysis mark. Positions 291-301 (LKKFNARRKLK) are calmodulin-binding. 2 positions are modified to phosphothreonine; by autocatalysis: Thr306 and Thr307. The tract at residues 320–358 (ITKKGEGSQVKESTDSSSTTLEDDDIKEDKKGTVDRSTT) is disordered. Ser327 carries the post-translational modification Phosphoserine.

Belongs to the protein kinase superfamily. CAMK Ser/Thr protein kinase family. CaMK subfamily. Interacts with CASK. Post-translationally, autophosphorylation at Thr-287 is independent of autophosphorylation at Thr-306 and Thr-307. As to expression, expressed at a high level in the central nervous system during the late embryonic stage. In adults, expression is more abundant in the head than in the body.

The catalysed reaction is L-seryl-[protein] + ATP = O-phospho-L-seryl-[protein] + ADP + H(+). It catalyses the reaction L-threonyl-[protein] + ATP = O-phospho-L-threonyl-[protein] + ADP + H(+). With respect to regulation, CASK plays a role in regulation of CaMKII autophosphorylation. When complexed with CASK and in the presence Ca[2+]/CaM, autophosphorylation of Thr-287 causes constitutive activation of the kinase. In the absence of Ca[2+]/CaM, autophosphorylation of Thr-306 causes inactivation of the kinase. In terms of biological role, a key regulator of plasticity in synaptic physiology and behavior, alterations in its activity produce pleiotrophic effects that involve synaptic transmission and development as well as various aspects of behavior. Directly modulates eag potassium channels. This is Calcium/calmodulin-dependent protein kinase type II alpha chain (CaMKII) from Drosophila melanogaster (Fruit fly).